We begin with the raw amino-acid sequence, 615 residues long: MPIQVLPPQLANQIAAGEVVERPASVVKELVENSLDAGATRIDIDIERGGAKLIRIRDNGCGIKKDELALALARHATSKIASLDDLEAIISLGFRGEALASISSVSRLTLTSRTAEQQEAWQAYAEGRDMDVTVKPAAHPVGTTLEVLDLFYNTPARRKFLRTEKTEFNHIDEIIRRIALARFDVTISLSHNGKIVRQYRAVPEGGQKERRLGAICGTAFLEQALAIEWQHGDLTLRGWVADPNHTTPALAEIQYCYVNGRMMRDRLINHAIRQACEDKLGADQQPAFVLYLEIDPHQVDVNVHPAKHEVRFHQSRLVHDFIYQGVLSVLQQQLETPLPLDDEPQPAPRAIPENRVAAGRNHFAEPAVREPVAPRYSPAPASGSRPAASWPNAQPGYQKQQGEVYRQLLQTPAPMQKPKAPEPQEPALAANSQSFGRVLTIVHSDCALLERDGNISLLSLPVAERWLRQAQLTPGEVPVCAQPLLIPLRLKVSGEEKSALEKAQSALAELGIDFQSDAQHVTIRAVPLPLRQQNLQILIPELIGYLAKQSVFEPGNIAQWIARNLMSEHAQWSMAQAITLLADVERLCPQLVKTPPGGLLQSVDLHPAIKALKDE.

The disordered stretch occupies residues 362–397 (HFAEPAVREPVAPRYSPAPASGSRPAASWPNAQPGY). Low complexity predominate over residues 373-391 (APRYSPAPASGSRPAASWP).

The protein belongs to the DNA mismatch repair MutL/HexB family.

In terms of biological role, this protein is involved in the repair of mismatches in DNA. It is required for dam-dependent methyl-directed DNA mismatch repair. May act as a 'molecular matchmaker', a protein that promotes the formation of a stable complex between two or more DNA-binding proteins in an ATP-dependent manner without itself being part of a final effector complex. This is DNA mismatch repair protein MutL from Escherichia coli O45:K1 (strain S88 / ExPEC).